Here is a 122-residue protein sequence, read N- to C-terminus: Large ribosomal subunit protein uL14 (122 aa).

This sequence belongs to the universal ribosomal protein uL14 family. In terms of assembly, part of the 50S ribosomal subunit. Forms a cluster with proteins L3 and L19. In the 70S ribosome, L14 and L19 interact and together make contacts with the 16S rRNA in bridges B5 and B8.

Binds to 23S rRNA. Forms part of two intersubunit bridges in the 70S ribosome. This Mycoplasmopsis agalactiae (strain NCTC 10123 / CIP 59.7 / PG2) (Mycoplasma agalactiae) protein is Large ribosomal subunit protein uL14.